A 331-amino-acid polypeptide reads, in one-letter code: Protein C10 (331 aa).

The protein belongs to the poxviridae C4/C10 protein family.

This is Protein C10 from Vaccinia virus (strain Western Reserve) (VACV).